We begin with the raw amino-acid sequence, 125 residues long: Anticoagulant salivary protein 14 (125 aa).

An N-terminal signal peptide occupies residues 1-21; that stretch reads MGLTGTMLVLVSLAFFGSAAA. N26, N81, and N87 each carry an N-linked (GlcNAc...) asparagine glycan. A compositionally biased stretch (polar residues) spans 75-86; it reads GECHLTNNSGGP. A disordered region spans residues 75–125; sequence GECHLTNNSGGPNETDDYTPAPTEKPKQKKKKTKKTKKPKRKSKKDQEKNL. A responsible for anticoagulant activity region spans residues 91-125; the sequence is DYTPAPTEKPKQKKKKTKKTKKPKRKSKKDQEKNL. A compositionally biased stretch (basic residues) spans 101 to 118; the sequence is KQKKKKTKKTKKPKRKSK.

The protein belongs to the salp14 family. As to expression, salivary gland (at protein level). Saliva (at protein level).

The protein localises to the secreted. Its function is as follows. Salivary anticoagulant protein that facilitates blood feeding of adult ticks on vertebrate species. Inhibits host coagulation factor Xa (F10). Blocks the assembly and/or early activity of the prothrombinase complex (Xa-Va/F10-F5). Inhibits the lectin pathway of complement system activation in the host. This Ixodes scapularis (Black-legged tick) protein is Anticoagulant salivary protein 14.